The primary structure comprises 147 residues: MSVLEASEIMQLIPNRYPILFMDRVDELNPGESIVVTKNVTINESFFQGHFPGNPVMPGVLIIEALAQAASILILKSEKFAGKTAYLGAIKDAKFRKIVRPGDVLKLHVQMVKQRSNMGTVSCQAMVGDKAACTTDLTFIVGATDSK.

The active site involves histidine 50.

This sequence belongs to the thioester dehydratase family. FabZ subfamily.

It localises to the cytoplasm. The enzyme catalyses a (3R)-hydroxyacyl-[ACP] = a (2E)-enoyl-[ACP] + H2O. Involved in unsaturated fatty acids biosynthesis. Catalyzes the dehydration of short chain beta-hydroxyacyl-ACPs and long chain saturated and unsaturated beta-hydroxyacyl-ACPs. In Lactiplantibacillus plantarum (strain ATCC BAA-793 / NCIMB 8826 / WCFS1) (Lactobacillus plantarum), this protein is 3-hydroxyacyl-[acyl-carrier-protein] dehydratase FabZ.